The chain runs to 852 residues: MATGVSSRDGSRERIRRRAVARDHPGCGPHRLDRPIGHIRYPHRHSISFSPFASLTLSHDPAPSQSVGKRPQKSTKTASRRKVETAAADAPRFINRELAWLEFNARVLDQADDPSVRLLERAKFLAITSSNLDEFMMVRVGSLKLQAVSGGGRRDPSGRTATEQLQAISKRCQGHVDRQYELLRNELLPLLGEHKINQVDPAECSDRLLAAAERHFRGDVLAVLSPQALHDRRFPMLPGLGIHLCVQLRPGDEIGPQRTPPPSDSLDNRVPSNLKRNSDTANQQPTPAENISAPEDGAEQTEPETQFAVIPLGRTLGRVIPLPIEKPPIEKGVAPKESDDTSPIESGYSYALLEDLVSHFVDEFFPGREVIQCKPFRITRNADIELREDGAGDLLGGMEEVLESRRLSDVVRLEIDANANSEIRDYLIKSFNVDPQFVFDIDGPLDLTYLFALHGLKGMNTLRDDEWPPQRSPRIDPAESMFTSISDGDIMLMHPYESFDPVVRLLEEASVDPDVLAVKQILYRTSRNSPIVAALMRAAERGKYVTAIVELKARFDEARNIEWAREMEQAGVQVIYGIRGLKTHAKVCIIVRREPQGLVRYVHFGTGNYNEVTANLYGDISVLTCDEILGTDATMFFNAVTGASQPQPLQQLGMAPLTLRRQILDLIQGETERSRQGQKGEIIAKMNALVDTEVIDSLYMASQAGVKIRLNVRGVCCLRPGVPGMSETIEVVSIVDRFLEHARTFYFRHGGDHEMFISSADWMPRNLDRRVELLVPVIDPAARKRLRETLQLYFRDNQNAWRMQPDGSYQRLKPRKNEAPMRVQETLYHQVVENRKAGKHAPQSTFETHRPD.

Disordered regions lie at residues 1 to 36 (MATGVSSRDGSRERIRRRAVARDHPGCGPHRLDRPI) and 58 to 82 (SHDPAPSQSVGKRPQKSTKTASRRK). Residues 20–36 (VARDHPGCGPHRLDRPI) are compositionally biased toward basic and acidic residues. Polar residues predominate over residues 58 to 67 (SHDPAPSQSV). Asn131 provides a ligand contact to ATP. The tract at residues 251–303 (GDEIGPQRTPPPSDSLDNRVPSNLKRNSDTANQQPTPAENISAPEDGAEQTEP) is disordered. Positions 258-303 (RTPPPSDSLDNRVPSNLKRNSDTANQQPTPAENISAPEDGAEQTEP) are insert. Polar residues predominate over residues 270 to 289 (VPSNLKRNSDTANQQPTPAE). Positions 524 and 554 each coordinate Mg(2+). The active-site Phosphohistidine intermediate is the His584. ATP-binding residues include Tyr617, Arg713, and His741.

This sequence belongs to the polyphosphate kinase 1 (PPK1) family. Requires Mg(2+) as cofactor. In terms of processing, an intermediate of this reaction is the autophosphorylated ppk in which a phosphate is covalently linked to a histidine residue through a N-P bond.

It catalyses the reaction [phosphate](n) + ATP = [phosphate](n+1) + ADP. In terms of biological role, catalyzes the reversible transfer of the terminal phosphate of ATP to form a long-chain polyphosphate (polyP). The polypeptide is Polyphosphate kinase (Rhodopirellula baltica (strain DSM 10527 / NCIMB 13988 / SH1)).